The following is a 420-amino-acid chain: Histidine--tRNA ligase (420 aa).

The protein belongs to the class-II aminoacyl-tRNA synthetase family. Homodimer.

Its subcellular location is the cytoplasm. The enzyme catalyses tRNA(His) + L-histidine + ATP = L-histidyl-tRNA(His) + AMP + diphosphate + H(+). This Thermotoga maritima (strain ATCC 43589 / DSM 3109 / JCM 10099 / NBRC 100826 / MSB8) protein is Histidine--tRNA ligase (hisS).